A 147-amino-acid chain; its full sequence is Cyanate hydratase (147 aa).

Catalysis depends on residues arginine 88, glutamate 91, and serine 114.

It belongs to the cyanase family.

The enzyme catalyses cyanate + hydrogencarbonate + 3 H(+) = NH4(+) + 2 CO2. Functionally, catalyzes the reaction of cyanate with bicarbonate to produce ammonia and carbon dioxide. The sequence is that of Cyanate hydratase from Methylobacillus flagellatus (strain ATCC 51484 / DSM 6875 / VKM B-1610 / KT).